We begin with the raw amino-acid sequence, 423 residues long: Osteomodulin (423 aa).

Positions Met-1–Gly-20 are cleaved as a signal peptide. Sulfotyrosine is present on residues Tyr-22, Tyr-25, Tyr-31, Tyr-39, Tyr-51, and Tyr-77. One can recognise an LRRNT domain in the interval Ala-53 to Met-91. 11 LRR repeats span residues His-92–Asn-113, His-116–Ser-129, Asn-142–Leu-164, Glu-165–Gly-184, Asn-187–Ile-207, Lys-213–Leu-233, Ser-234–Lys-255, Lys-258–Leu-279, Asn-281–Gln-294, Asn-301–Pro-322, and His-331–Cys-353. N-linked (GlcNAc...) asparagine glycosylation is found at Asn-113 and Asn-121. A glycan (N-linked (GlcNAc...) asparagine) is linked at Asn-187. 2 N-linked (GlcNAc...) asparagine glycosylation sites follow: Asn-242 and Asn-278. The N-linked (GlcNAc...) asparagine glycan is linked to Asn-316. Cys-321 and Cys-353 form a disulfide bridge. Positions Tyr-383–His-408 are disordered. The segment covering Asp-385–Ser-394 has biased composition (acidic residues). Residues Tyr-413 and Tyr-414 each carry the sulfotyrosine modification.

The protein belongs to the small leucine-rich proteoglycan (SLRP) family. SLRP class II subfamily. In terms of assembly, binds the alpha(V)beta(3)-integrin. Post-translationally, glycosylated; contains keratan sulfate. Osteoblast and odontoblast. Expressed in femoral bone and calvaria tissues. Detected in femoral head, rib, tendon and bone marrow.

It localises to the secreted. The protein resides in the extracellular space. The protein localises to the extracellular matrix. In terms of biological role, may be implicated in biomineralization processes. Has a function in binding of osteoblasts via the alpha(V)beta(3)-integrin. The protein is Osteomodulin (Omd) of Rattus norvegicus (Rat).